We begin with the raw amino-acid sequence, 84 residues long: Small ribosomal subunit protein bS20 (84 aa).

Positions M1 to M25 are disordered.

This sequence belongs to the bacterial ribosomal protein bS20 family.

Binds directly to 16S ribosomal RNA. The chain is Small ribosomal subunit protein bS20 from Ureaplasma parvum serovar 3 (strain ATCC 700970).